Consider the following 469-residue polypeptide: MPKYTPEEVLDLIQKEGVQYVDLRFSDPFGQWQHLTIPAYEISKETFEVGRGFDGSSIRGWQSINESDMLAKPDPNTAFIDPFIEPKTLVMICDIYDPVTGERYGRDTRYIAQKAEQYLKQTGIGDTAYFGPEAEFFIFDSVEFGTAANYAFWRVDSEEGWWNREVPSSGYKIPHKRGYFPAPPVDKMMQLRNEMVSIMSDLGIIVELHHHEVATAGQGEIDIRYDSLLNQADKLFLYKYIVRMVAAKHGKYATFMAKVLPNDNGSGMHTHFSIWKNGENLFAGSEYAGLSKTALYAIGGILKHGPAIAAFTNPTVNSYHRLVPGYEAPVRLAYSARNRSAAIRIPMYSQNPKAKRIEVRFPDATSNPYLAFAAILMAAIDGIENEIDPGEPFDKDIYSLPPEELEGIPQLPGSLEEALKALEEDYEFLLKGNVFTEEFIQLWIESKRAEIDELRFIPHPKEFELYWDI.

The region spanning 16 to 100 (EGVQYVDLRF…MICDIYDPVT (85 aa)) is the GS beta-grasp domain. The region spanning 108–469 (TRYIAQKAEQ…PKEFELYWDI (362 aa)) is the GS catalytic domain. Glutamate 133 and glutamate 135 together coordinate Mg(2+). Residue glutamate 207 coordinates ATP. Glutamate 212 and glutamate 220 together coordinate Mg(2+). L-glutamate is bound by residues 264–265 (NG) and glycine 265. Histidine 269 contributes to the Mg(2+) binding site. ATP-binding positions include 271 to 273 (HFS) and serine 273. Residues arginine 321, glutamate 327, and arginine 339 each contribute to the L-glutamate site. Positions 339, 344, and 353 each coordinate ATP. Position 358 (glutamate 358) interacts with Mg(2+). Arginine 360 serves as a coordination point for L-glutamate. Tyrosine 398 is subject to O-AMP-tyrosine.

The protein belongs to the glutamine synthetase family. In terms of assembly, oligomer of 12 subunits arranged in the form of two hexagons. Requires Mg(2+) as cofactor.

The protein resides in the cytoplasm. The enzyme catalyses L-glutamate + NH4(+) + ATP = L-glutamine + ADP + phosphate + H(+). With respect to regulation, the activity of this enzyme could be controlled by adenylation under conditions of abundant glutamine. In terms of biological role, catalyzes the ATP-dependent biosynthesis of glutamine from glutamate and ammonia. In Aquifex aeolicus (strain VF5), this protein is Glutamine synthetase.